The chain runs to 418 residues: Serine/threonine-protein kinase Sgk1 (418 aa).

The interval 50–78 is disordered; the sequence is PQEPELLNENSSPPPSPSQQINLGPSSNP. Residues 68-78 are compositionally biased toward polar residues; it reads QQINLGPSSNP. Residues 85–342 enclose the Protein kinase domain; it reads FQFLKIIGKG…FMEIKNHMFF (258 aa). ATP is bound by residues 91-99 and Lys114; that span reads IGKGSFGKV. Catalysis depends on Asp209, which acts as the Proton acceptor. An AGC-kinase C-terminal domain is found at 343-418; the sequence is SPINWDDLIN…SYAPPMESYL (76 aa).

The protein belongs to the protein kinase superfamily. AGC Ser/Thr protein kinase family.

It is found in the cytoplasm. The protein resides in the nucleus. The protein localises to the endoplasmic reticulum. The catalysed reaction is L-seryl-[protein] + ATP = O-phospho-L-seryl-[protein] + ADP + H(+). The enzyme catalyses L-threonyl-[protein] + ATP = O-phospho-L-threonyl-[protein] + ADP + H(+). Its function is as follows. Protein kinase that may play an important role in cellular stress response. Plays an important role in activating certain potassium, sodium, and chloride channels, suggesting an involvement in the regulation of processes such as cell survival, neuronal excitability, and renal sodium excretion. The chain is Serine/threonine-protein kinase Sgk1 (sgk1) from Xenopus tropicalis (Western clawed frog).